Reading from the N-terminus, the 700-residue chain is Non-hemolytic phospholipase C (700 aa).

Positions 1–34 (MTNQNRRDFLRLAAGTAGAAALQLFPPVIREALA) form a signal peptide, tat-type signal.

It belongs to the bacterial phospholipase C family. Predicted to be exported by the Tat system. The position of the signal peptide cleavage has not been experimentally proven.

The catalysed reaction is a 1,2-diacyl-sn-glycero-3-phosphocholine + H2O = phosphocholine + a 1,2-diacyl-sn-glycerol + H(+). Functionally, hydrolyzes phosphatidylserine as well as phosphatidylcholine. The polypeptide is Non-hemolytic phospholipase C (plcN) (Burkholderia pseudomallei (strain K96243)).